The sequence spans 518 residues: MTDDRSTDERRTADRDFEVDLDDVLDDEDDDEGLFDDLLSGEPIFENKEVLRPSYTPHELPHRNDQINNMATILVAALRGETPSNILIYGKTGTGKTASAKFVSQELEKTSKKYDVPCEVEYINCEVTDTQYRVLAQLANTFIDQNRAFVDARIADLSDLRAQADDDPNALEIGGSPGDDRTGNESSEGSDVSDSFSDLRERFDSVAEIDDRIDSLEADKAEMEQVPMTGWPTDRVYATFFDAVDYVERVAVIMLDEIDKLVEKSGDDTLYNLSRMNSELDNSRVSIIGISNDLKFTDFLDPRVKSSLGEEEIVFPPYDANQLRDILQHRSDVAFKADALSDDVLPLCAAFAAQEHGDARRALDLLRTAGELAERDQAENVTEDHVRRAQDKIELDRVVEVVRTLPTQSKLVLYAILLLEDNGVHNVNTGEVYNIYKTLCDELDADVLTQRRVTDLISELDMLGIVNAVVVSKGRYGRTKEISLSVPVEETEAVLEADSRLSDIEDITPFVQARFENN.

94 to 98 is an ATP binding site; that stretch reads TGKTA. The interval 165-196 is disordered; that stretch reads DDDPNALEIGGSPGDDRTGNESSEGSDVSDSF. The span at 186–196 shows a compositional bias: low complexity; sequence SSEGSDVSDSF. ATP contacts are provided by Y318 and R330.

Belongs to the CDC6/cdc18 family.

Involved in regulation of DNA replication. Required to initiate DNA replication of the circular chromosome at a nearby autonomously replicating sequence (ARS) oriC1. This is ORC1-type DNA replication protein 7 (orc7) from Halobacterium salinarum (strain ATCC 700922 / JCM 11081 / NRC-1) (Halobacterium halobium).